A 56-amino-acid polypeptide reads, in one-letter code: Large ribosomal subunit protein bL32 (56 aa).

A disordered region spans residues 1–37; that stretch reads MAVQQNKKSRSRRDMRRSHDALTTAAISVDKASGEKH. Residues 7-16 show a composition bias toward basic residues; that stretch reads KKSRSRRDMR.

Belongs to the bacterial ribosomal protein bL32 family.

The sequence is that of Large ribosomal subunit protein bL32 (rpmF) from Pasteurella multocida (strain Pm70).